Consider the following 332-residue polypeptide: Anthranilate phosphoribosyltransferase (332 aa).

Residues Gly-79, 82–83 (GD), Thr-87, 89–92 (NIST), 107–115 (KHGNRGVSS), and Ser-119 each bind 5-phospho-alpha-D-ribose 1-diphosphate. Gly-79 serves as a coordination point for anthranilate. Residue Ser-91 coordinates Mg(2+). Asn-110 is a binding site for anthranilate. Arg-165 contacts anthranilate. Positions 223 and 224 each coordinate Mg(2+).

Belongs to the anthranilate phosphoribosyltransferase family. In terms of assembly, homodimer. Mg(2+) serves as cofactor.

It carries out the reaction N-(5-phospho-beta-D-ribosyl)anthranilate + diphosphate = 5-phospho-alpha-D-ribose 1-diphosphate + anthranilate. It participates in amino-acid biosynthesis; L-tryptophan biosynthesis; L-tryptophan from chorismate: step 2/5. Functionally, catalyzes the transfer of the phosphoribosyl group of 5-phosphorylribose-1-pyrophosphate (PRPP) to anthranilate to yield N-(5'-phosphoribosyl)-anthranilate (PRA). This is Anthranilate phosphoribosyltransferase from Vibrio cholerae serotype O1 (strain ATCC 39541 / Classical Ogawa 395 / O395).